A 1254-amino-acid polypeptide reads, in one-letter code: Histone-lysine N-methyltransferase eggless (1254 aa).

Disordered stretches follow at residues 24-209 and 228-248; these read ALVE…EIPR and PVPR…SKTT. Composition is skewed to basic and acidic residues over residues 40–57 and 65–81; these read TPEK…KDLT and KSQE…KDPE. The segment covering 112 to 125 has biased composition (low complexity); sequence SVELLESPLKSPSS. Positions 136-162 are enriched in basic and acidic residues; that stretch reads LEEKEKPGPAKELEPKESEPDSKESSK. Polar residues predominate over residues 172 to 181; sequence ELISSPTSDD. 2 stretches are compositionally biased toward basic and acidic residues: residues 182 to 197 and 234 to 243; these read SLAK…EHGQ and AMQESKETQK. Residues 391-416 are a coiled coil; sequence TILQAKIERLAKKFEEVDLQLAQVQG. 2 Tudor domains span residues 535-607 and 634-691; these read RLPI…SEKV and QCTK…KETQ. Residues 734–760 are disordered; the sequence is ARKSTSKSGSPASTAAPPTGSSSSSAV. Low complexity predominate over residues 739 to 759; sequence SKSGSPASTAAPPTGSSSSSA. Positions 811-877 constitute an MBD domain; sequence LDSYSPLSKP…DNFDFTPDLR (67 aa). A Pre-SET domain is found at 939-1011; it reads VCCDCEDDCS…NCLNRVVQHS (73 aa). The Zn(2+) site is built by C941, C943, C947, C953, C955, C993, C997, C999, and C1003. Residues 1014–1229 enclose the SET domain; the sequence is MKLQVFKTSN…SGTELTWNYN (216 aa). Residues 1024 to 1026, D1062, and Y1064 contribute to the S-adenosyl-L-methionine site; that span reads RGW. Positions 1081–1090 are enriched in basic and acidic residues; sequence YESDVERADL. Residues 1081-1139 are disordered; that stretch reads YESDVERADLDHEDDNYGPDAEDDDDFRPNNYYQKKKEKLRSSRSNSSSTQNTELDSQE. Residues 1091 to 1106 show a composition bias toward acidic residues; sequence DHEDDNYGPDAEDDDD. Residues 1123–1134 show a composition bias toward low complexity; that stretch reads SRSNSSSTQNTE. S-adenosyl-L-methionine-binding positions include R1183 and 1186 to 1187; that span reads NH. The Zn(2+) site is built by C1189, C1242, C1244, and C1249. Residues 1238 to 1254 enclose the Post-SET domain; the sequence is KVLYCQCGAQNCRVRLL.

This sequence belongs to the class V-like SAM-binding methyltransferase superfamily. Histone-lysine methyltransferase family. Suvar3-9 subfamily.

Its subcellular location is the nucleus. The protein resides in the chromosome. It carries out the reaction L-lysyl(9)-[histone H3] + 3 S-adenosyl-L-methionine = N(6),N(6),N(6)-trimethyl-L-lysyl(9)-[histone H3] + 3 S-adenosyl-L-homocysteine + 3 H(+). Its function is as follows. Histone methyltransferase that specifically trimethylates 'Lys-9' of histone H3 in ovary. H3 'Lys-9' trimethylation represents a specific tag for epigenetic transcriptional repression by recruiting Su(var)205/HP1 to methylated histones. Plays a central role during oogenesis. In Drosophila pseudoobscura pseudoobscura (Fruit fly), this protein is Histone-lysine N-methyltransferase eggless (egg).